Here is a 491-residue protein sequence, read N- to C-terminus: Trigger factor (491 aa).

The region spanning 169–254 is the PPIase FKBP-type domain; that stretch reads GDRVTIDYLG…VKDVAAAAPI (86 aa). Positions 434 to 491 are disordered; sequence KVSKEELTAEDDADEKPAKKTASKKKAAAKADAAEGEEAAAPKRKAPAKKKASDESAE. Residues 452 to 461 are compositionally biased toward basic residues; sequence KKTASKKKAA.

It belongs to the FKBP-type PPIase family. Tig subfamily.

It is found in the cytoplasm. The catalysed reaction is [protein]-peptidylproline (omega=180) = [protein]-peptidylproline (omega=0). Involved in protein export. Acts as a chaperone by maintaining the newly synthesized protein in an open conformation. Functions as a peptidyl-prolyl cis-trans isomerase. The protein is Trigger factor of Sinorhizobium medicae (strain WSM419) (Ensifer medicae).